A 1918-amino-acid chain; its full sequence is Diacylglycerol kinase eta (1918 aa).

Over residues 1 to 10 (MAHLKLDTLH) the composition is skewed to basic and acidic residues. Residues 1 to 37 (MAHLKLDTLHVQRSPRGSRRSSPSSGRSSACSSGSIS) are disordered. Positions 20–37 (RSSPSSGRSSACSSGSIS) are enriched in low complexity. The 94-residue stretch at 82 to 175 (AIIKEGFLLK…WLGGLKTATA (94 aa)) folds into the PH domain. Phorbol-ester/DAG-type zinc fingers lie at residues 195 to 245 (HHHW…IANC) and 268 to 319 (PHQW…AVAC). The DAGKc domain occupies 350–486 (GNFSPLLVFV…DRWSIMVFEK (137 aa)). 4 disordered regions span residues 783 to 805 (GANIDDAGNRLSPCSDGGENTPT), 1017 to 1067 (TTLC…DDNP), 1177 to 1212 (PNTILTTSTSPTKKSGHGQDISVVVRPPTPLRGDSI), and 1380 to 1399 (ERDKEERGGKDKDKTPTEEA). Residues 1177-1189 (PNTILTTSTSPTK) are compositionally biased toward polar residues. The SAM domain occupies 1855–1918 (WSVNEVVTWL…LQAIKDLSEN (64 aa)).

Belongs to the eukaryotic diacylglycerol kinase family.

Its subcellular location is the cytoplasm. It catalyses the reaction a 1,2-diacyl-sn-glycerol + ATP = a 1,2-diacyl-sn-glycero-3-phosphate + ADP + H(+). Its function is as follows. Phosphorylates diacylglycerol (DAG) to generate phosphatidic acid (PA). This Drosophila erecta (Fruit fly) protein is Diacylglycerol kinase eta.